We begin with the raw amino-acid sequence, 103 residues long: ATP synthase F(0) complex subunit g, mitochondrial (103 aa).

The residue at position 2 (A2) is an N-acetylalanine. N6-acetyllysine occurs at positions 11, 24, 35, and 54.

Belongs to the ATPase g subunit family. Component of the ATP synthase complex composed at least of ATP5F1A/subunit alpha, ATP5F1B/subunit beta, ATP5MC1/subunit c (homooctomer), MT-ATP6/subunit a, MT-ATP8/subunit 8, ATP5ME/subunit e, ATP5MF/subunit f, ATP5MG/subunit g, ATP5MK/subunit k, ATP5MJ/subunit j, ATP5F1C/subunit gamma, ATP5F1D/subunit delta, ATP5F1E/subunit epsilon, ATP5PF/subunit F6, ATP5PB/subunit b, ATP5PD/subunit d, ATP5PO/subunit OSCP. ATP synthase complex consists of a soluble F(1) head domain (subunits alpha(3) and beta(3)) - the catalytic core - and a membrane F(0) domain - the membrane proton channel (subunits c, a, 8, e, f, g, k and j). These two domains are linked by a central stalk (subunits gamma, delta, and epsilon) rotating inside the F1 region and a stationary peripheral stalk (subunits F6, b, d, and OSCP).

It localises to the mitochondrion. The protein localises to the mitochondrion inner membrane. In terms of biological role, subunit g, of the mitochondrial membrane ATP synthase complex (F(1)F(0) ATP synthase or Complex V) that produces ATP from ADP in the presence of a proton gradient across the membrane which is generated by electron transport complexes of the respiratory chain. ATP synthase complex consist of a soluble F(1) head domain - the catalytic core - and a membrane F(1) domain - the membrane proton channel. These two domains are linked by a central stalk rotating inside the F(1) region and a stationary peripheral stalk. During catalysis, ATP synthesis in the catalytic domain of F(1) is coupled via a rotary mechanism of the central stalk subunits to proton translocation. In vivo, can only synthesize ATP although its ATP hydrolase activity can be activated artificially in vitro. Part of the complex F(0) domain. The sequence is that of ATP synthase F(0) complex subunit g, mitochondrial from Mus musculus (Mouse).